Reading from the N-terminus, the 91-residue chain is Small ribosomal subunit protein uS19 (91 aa).

Belongs to the universal ribosomal protein uS19 family.

Functionally, protein S19 forms a complex with S13 that binds strongly to the 16S ribosomal RNA. In Pseudomonas putida (strain ATCC 700007 / DSM 6899 / JCM 31910 / BCRC 17059 / LMG 24140 / F1), this protein is Small ribosomal subunit protein uS19.